A 1127-amino-acid polypeptide reads, in one-letter code: uncharacterized protein (1127 aa).

The first 26 residues, 1–26 (MRIHQRSAPCVPVLLFLFLPSAPLCA), serve as a signal peptide directing secretion. Residues 533–600 (ETESLSPPAD…ASSSPSEMAV (68 aa)) form a disordered region. 2 stretches are compositionally biased toward low complexity: residues 536–549 (SLSPPADTASTPSP) and 583–599 (AGASEEADASSSPSEMA). A coiled-coil region spans residues 1076-1126 (SEDEKEYQRALQELQKGNKLVASAVVEQLLQKDRNKKSAKIQQLKKRIDAQ).

This is an uncharacterized protein from Treponema pallidum (strain Nichols).